Here is a 150-residue protein sequence, read N- to C-terminus: Large ribosomal subunit protein uL13 (150 aa).

The protein belongs to the universal ribosomal protein uL13 family. Part of the 50S ribosomal subunit.

This protein is one of the early assembly proteins of the 50S ribosomal subunit, although it is not seen to bind rRNA by itself. It is important during the early stages of 50S assembly. The chain is Large ribosomal subunit protein uL13 from Chlorobium phaeobacteroides (strain BS1).